A 757-amino-acid polypeptide reads, in one-letter code: Cellulose synthase-like protein B5 (757 aa).

A run of 2 helical transmembrane segments spans residues Ala-24 to Ile-44 and Val-50 to Cys-70. Catalysis depends on residues Asp-136 and Asp-460. A run of 6 helical transmembrane segments spans residues Leu-531–Leu-551, Ile-572–Phe-592, Leu-613–Ile-633, Leu-671–Val-691, Gly-704–Leu-724, and Ile-735–Val-755.

This sequence belongs to the glycosyltransferase 2 family. Plant cellulose synthase-like B subfamily. Expressed in young seedlings, primarily in the vascular tissue. Expressed in the root cap.

Its subcellular location is the golgi apparatus membrane. Functionally, thought to be a Golgi-localized beta-glycan synthase that polymerize the backbones of noncellulosic polysaccharides (hemicelluloses) of plant cell wall. The protein is Cellulose synthase-like protein B5 (CSLB5) of Arabidopsis thaliana (Mouse-ear cress).